We begin with the raw amino-acid sequence, 210 residues long: Aminoglycoside 2'-N-acetyltransferase (210 aa).

The N-acetyltransferase domain maps to 21–189 (IHTSDLDQET…SLFVLPVDLP (169 aa)). Substrate is bound by residues Asp54 and 106-107 (EA). CoA-binding positions include 108–110 (VAV) and 115–120 (RGDGLG). Substrate contacts are provided by residues Ser141 and 176 to 177 (ED).

This sequence belongs to the AAC(2')-I acetyltransferase family. In terms of assembly, homodimer.

Functionally, catalyzes the coenzyme A-dependent acetylation of the 2' hydroxyl or amino group of a broad spectrum of aminoglycosides. It confers resistance to aminoglycosides. This Mycolicibacterium smegmatis (strain ATCC 700084 / mc(2)155) (Mycobacterium smegmatis) protein is Aminoglycoside 2'-N-acetyltransferase (aac).